The following is a 409-amino-acid chain: Elongation factor Tu, chloroplastic (409 aa).

The tr-type G domain maps to 10 to 214 (KPHVNIGTIG…AVDEYIPTPE (205 aa)). The segment at 19–26 (GHVDHGKT) is G1. 19–26 (GHVDHGKT) contacts GTP. Thr26 is a binding site for Mg(2+). Residues 60-64 (GITIN) form a G2 region. Residues 81 to 84 (DCPG) form a G3 region. Residues 81 to 85 (DCPGH) and 136 to 139 (NKED) each bind GTP. The interval 136–139 (NKED) is G4. Residues 174–176 (SAL) form a G5 region.

It belongs to the TRAFAC class translation factor GTPase superfamily. Classic translation factor GTPase family. EF-Tu/EF-1A subfamily.

Its subcellular location is the plastid. It localises to the chloroplast. It carries out the reaction GTP + H2O = GDP + phosphate + H(+). In terms of biological role, GTP hydrolase that promotes the GTP-dependent binding of aminoacyl-tRNA to the A-site of ribosomes during protein biosynthesis. The protein is Elongation factor Tu, chloroplastic (tufA) of Phaeodactylum tricornutum (strain CCAP 1055/1).